The primary structure comprises 223 residues: Protein FAM3D (223 aa).

A signal peptide spans 1 to 25 (MRVAGLIRVVVFIFTIVTMWVFLRS). 2 cysteine pairs are disulfide-bonded: cysteine 54-cysteine 82 and cysteine 60-cysteine 217. Residues 62-221 (NNFFAFKISS…LELEGCVPRK (160 aa)) enclose the GG-type lectin domain. Residue asparagine 106 is glycosylated (N-linked (GlcNAc...) asparagine).

The protein belongs to the FAM3 family.

Its subcellular location is the secreted. This chain is Protein FAM3D, found in Mus musculus (Mouse).